We begin with the raw amino-acid sequence, 270 residues long: MSNKVHLGHTARKRFGQNFLTDENVINRIVGAISPDNEHVMVEIGPGLAALTEPVASGIDKLTVVELDKDLVERLKTHPTLKDKLEIHQGDALNFDFKQLVREDMQMKVFGNLPYNISTPLMFHLFEFAQYIENMHFMLQKEVVLRLSASPGTKAYGRLTVMAQYHCQVMPVLEVPPGCFTPPPKVDSAVVRLVPYKTKPFPCKDVEVLRHLTTTAFNMRRKTLRNNLKHMLSDDEFAQLEIDSTLRPEQISVQQYVAMANLFIDKQTKS.

The S-adenosyl-L-methionine site is built by Asn18, Leu20, Gly45, Glu66, Asp91, and Asn112.

This sequence belongs to the class I-like SAM-binding methyltransferase superfamily. rRNA adenine N(6)-methyltransferase family. RsmA subfamily.

It is found in the cytoplasm. The enzyme catalyses adenosine(1518)/adenosine(1519) in 16S rRNA + 4 S-adenosyl-L-methionine = N(6)-dimethyladenosine(1518)/N(6)-dimethyladenosine(1519) in 16S rRNA + 4 S-adenosyl-L-homocysteine + 4 H(+). Functionally, specifically dimethylates two adjacent adenosines (A1518 and A1519) in the loop of a conserved hairpin near the 3'-end of 16S rRNA in the 30S particle. May play a critical role in biogenesis of 30S subunits. In Shewanella piezotolerans (strain WP3 / JCM 13877), this protein is Ribosomal RNA small subunit methyltransferase A.